Reading from the N-terminus, the 151-residue chain is Lectin-like protein BA14k (151 aa).

An N-terminal signal peptide occupies residues 1 to 26; that stretch reads MNIFKQTCVGAFAVIFGATSIAPTMA. Residues 83–103 form a helical membrane-spanning segment; that stretch reads GWWYPLAAFGAGAIIGGAVSQ.

Belongs to the BA14k family.

It localises to the cell membrane. Has immunoglobulin-binding and hemagglutination properties, and can bind to mannose. Essential for virulence. May be involved in LPS biosynthesis or polysaccharide transport. The chain is Lectin-like protein BA14k from Brucella anthropi (strain ATCC 49188 / DSM 6882 / CCUG 24695 / JCM 21032 / LMG 3331 / NBRC 15819 / NCTC 12168 / Alc 37) (Ochrobactrum anthropi).